Here is a 507-residue protein sequence, read N- to C-terminus: ATP synthase subunit alpha, chloroplastic (507 aa).

An ATP-binding site is contributed by 170 to 177; it reads GDRQTGKT. Thr257 is modified (phosphothreonine).

Belongs to the ATPase alpha/beta chains family. In terms of assembly, F-type ATPases have 2 components, CF(1) - the catalytic core - and CF(0) - the membrane proton channel. CF(1) has five subunits: alpha(3), beta(3), gamma(1), delta(1), epsilon(1). CF(0) has four main subunits: a, b, b' and c.

It is found in the plastid. It localises to the chloroplast thylakoid membrane. It catalyses the reaction ATP + H2O + 4 H(+)(in) = ADP + phosphate + 5 H(+)(out). In terms of biological role, produces ATP from ADP in the presence of a proton gradient across the membrane. The alpha chain is a regulatory subunit. This is ATP synthase subunit alpha, chloroplastic from Aethionema grandiflorum (Persian stone-cress).